The following is a 687-amino-acid chain: DNA-directed RNA polymerase subunit beta' (687 aa).

4 residues coordinate Zn(2+): cysteine 69, cysteine 71, cysteine 87, and cysteine 90. Residues aspartate 492, aspartate 494, and aspartate 496 each coordinate Mg(2+).

The protein belongs to the RNA polymerase beta' chain family. RpoC1 subfamily. In terms of assembly, in plastids the minimal PEP RNA polymerase catalytic core is composed of four subunits: alpha, beta, beta', and beta''. When a (nuclear-encoded) sigma factor is associated with the core the holoenzyme is formed, which can initiate transcription. Mg(2+) is required as a cofactor. Requires Zn(2+) as cofactor.

The protein localises to the plastid. It localises to the chloroplast. The catalysed reaction is RNA(n) + a ribonucleoside 5'-triphosphate = RNA(n+1) + diphosphate. Its function is as follows. DNA-dependent RNA polymerase catalyzes the transcription of DNA into RNA using the four ribonucleoside triphosphates as substrates. The protein is DNA-directed RNA polymerase subunit beta' of Silene latifolia (White campion).